The sequence spans 525 residues: Sterol O-acyltransferase 2 (525 aa).

2 disordered regions span residues 1-34 and 77-97; these read MQPK…THGT and QDRP…ELHP. Residues 1 to 119 lie on the Cytoplasmic side of the membrane; sequence MQPKVPQLRR…IDELMEVQHF (119 aa). Residues 9-23 show a composition bias toward basic and acidic residues; sequence RRREGLGEEQEKGAR. His118 is a binding site for cholesterol. Residues 120-141 traverse the membrane as a helical segment; that stretch reads RTIYHMFIAGLCVLIISTLAID. The Lumenal segment spans residues 142 to 161; sequence FIDEGRLMLEFDLLLFSFGQ. The helical transmembrane segment at 162 to 187 threads the bilayer; it reads LPLALMTWVPMFLSTLLVPYQTLWLW. The Cytoplasmic portion of the chain corresponds to 188-199; it reads ARPRAGGAWMLG. Residues 200 to 223 form a helical membrane-spanning segment; it reads ASLGCVLLAAHAVVLCVLPVHVSV. Residues 224–231 lie on the Lumenal side of the membrane; the sequence is RHELPPAS. The helical transmembrane segment at 232–255 threads the bilayer; sequence RCVLVFEQVRLLMKSYSFLRETVP. The Cytoplasmic segment spans residues 256-296; the sequence is GIFCVRGGKGISPPSFSSYLYFLFCPTLIYRETYPRTPSIR. The residue at position 280 (Cys280) is a Cysteine sulfenic acid (-SOH); alternate. A Glycyl cysteine thioester (Cys-Gly) (interchain with G-Cter in ubiquitin); alternate cross-link involves residue Cys280. Residues 297-329 form a helical membrane-spanning segment; it reads WNYVAKNFAQVLGCLLYACFILGRLCVPVFANM. Topologically, residues 330–346 are lumenal; it reads SREPFSTRALLLSILHA. A helical transmembrane segment spans residues 347-372; the sequence is TGPGIFMLLLIFFAFLHCWLNAFAEM. The Cytoplasmic portion of the chain corresponds to 373-420; the sequence is LRFGDRMFYRDWWNSTSFSNYYRTWNVVVHDWLYSYVYQDGLWLLGRR. Residues 380-386 carry the FYXDWWN motif motif; it reads FYRDWWN. The an acyl-CoA site is built by Asn392, Arg395, Asn398, His402, Tyr410, and Ser433. Residues 421–445 form a helical membrane-spanning segment; the sequence is ARGVAMLGVFLVSAVVHEYIFCFVL. His437 is a catalytic residue. Residues 446-451 lie on the Lumenal side of the membrane; it reads GFFYPV. Residues 452–467 traverse the membrane as a helical segment; that stretch reads MLMLFLVFGGLLNFTM. Residues 468 to 473 are Cytoplasmic-facing; it reads NDRHTG. A helical membrane pass occupies residues 474-505; it reads PAWNILMWTFLFMGQGIQVSLYCQEWYARRHC. At 506–525 the chain is on the lumenal side; the sequence is PLPQTTFWGMVTPRSWSCHP.

Belongs to the membrane-bound acyltransferase family. Sterol o-acyltransferase subfamily. May form homo- or heterodimers. Interacts with INSIG1; the interaction is direct and promotes association with AMFR/gp78. In terms of processing, polyubiquitinated by AMFR/gp78 at Cys-280, leading to its degradation when the lipid levels are low. Association with AMFR/gp78 is mediated via interaction with INSIG1. High concentration of cholesterol and fatty acid results in Cys-280 oxidation, preventing ubiquitination at the same site, resulting in protein stabilization. Post-translationally, oxidized at Cys-280: high concentration of cholesterol and fatty acid induce reactive oxygen species, which oxidizes Cys-280, preventing ubiquitination at the same site, and resulting in protein stabilization.

The protein resides in the endoplasmic reticulum membrane. It carries out the reaction a sterol + a long-chain fatty acyl-CoA = a long-chain 3-hydroxysterol ester + CoA. The enzyme catalyses cholesterol + an acyl-CoA = a cholesterol ester + CoA. It catalyses the reaction cholesterol + (9Z)-octadecenoyl-CoA = cholesteryl (9Z-octadecenoate) + CoA. The catalysed reaction is (5Z,8Z,11Z,14Z,17Z)-eicosapentaenoyl-CoA + cholesterol = (5Z,8Z,11Z,14Z,17Z-eicosapentaenoyl)-cholesterol + CoA. It carries out the reaction (9Z,12Z,15Z)-octadecatrienoyl-CoA + cholesterol = (9Z,12Z,15Z-octadecatrienoyl)-cholesterol + CoA. The enzyme catalyses (5Z,8Z,11Z,14Z)-eicosatetraenoyl-CoA + cholesterol = cholesteryl (5Z,8Z,11Z,14Z)-eicosatetraenoate + CoA. In terms of biological role, catalyzes the formation of fatty acid-cholesterol esters, which are less soluble in membranes than cholesterol. Plays a role in lipoprotein assembly and dietary cholesterol absorption. Utilizes oleoyl-CoA ((9Z)-octadecenoyl-CoA) and linolenoyl-CoA ((9Z,12Z,15Z)-octadecatrienoyl-CoA) as substrates. May provide cholesteryl esters for lipoprotein secretion from hepatocytes and intestinal mucosa. This is Sterol O-acyltransferase 2 from Mus musculus (Mouse).